Consider the following 248-residue polypeptide: uncharacterized protein (248 aa).

Transmembrane regions (helical) follow at residues 65–85 (IIIY…QFLT), 105–125 (SITS…ILWY), 126–146 (ISWT…LGFI), 156–176 (LCCF…TLLI), 188–208 (LILN…SDYS), and 222–242 (VIYI…YKYT).

Its subcellular location is the cell membrane. This is an uncharacterized protein from Rickettsia prowazekii (strain Madrid E).